We begin with the raw amino-acid sequence, 88 residues long: HssA/B-like protein 11 (88 aa).

This sequence belongs to the hssA/B family.

The sequence is that of HssA/B-like protein 11 (hssl11) from Dictyostelium discoideum (Social amoeba).